The following is a 482-amino-acid chain: Falcipain-2b (482 aa).

Residues 1-35 (MDYHMDYIPNEVISHQGERFVDKYVDRKILKNKKS) lie on the Cytoplasmic side of the membrane. A propeptide spans 1-241 (MDYHMDYIPN…PLKNSKYLLD (241 aa)) (activation peptide). The short motif at 16–25 (QGERFVDKYV) is the Bipartite vacuolar targeting signal 1 element. Residues 36–56 (LLVIISLSVLSVVGFILFYFT) traverse the membrane as a helical; Signal-anchor for type II membrane protein segment. Residues 57–482 (PNFRKSDLFK…GTDAFIPLIE (426 aa)) lie on the Lumenal side of the membrane. A glycan (N-linked (GlcNAc...) asparagine) is linked at N67. The Bipartite vacuolar targeting signal 2 motif lies at 84–105 (KSPNGKKFIVSKIDEALSFYDN). N117 is a glycosylation site (N-linked (GlcNAc...) asparagine). Positions 242–258 (QINYDAVIKKYKGNENF) match the Nose motif; required for the correct folding of the mature form motif. Cystine bridges form between C280-C321, C314-C355, C340-C360, and C409-C470. C283 is an active-site residue. H415 is a catalytic residue. Positions 426 to 435 (EIVNPLTKKG) match the Arm motif; binds to host hemoglobin and required for the inhibitory interaction between the propeptide and the catalytic domain motif.

Belongs to the peptidase C1 family. As to quaternary structure, component of the hemozoin formation complex (HFC) composed of falcipains FP2A and/or FP2B, plasmepsins PMII, PMIII/HAP and PMIV, heme detoxifying protein HDP and falcilysin FLN. The HFC complex is involved in hemoglobin degradation and detoxification of heme in the food vacuole during the asexual blood stage.

The protein resides in the vacuole. It is found in the membrane. Functionally, cysteine protease which cleaves native host hemoglobin in the food vacuole during the asexual blood stage. Preferentially cleaves substrates which have a leucine at the P2 position. The polypeptide is Falcipain-2b (Plasmodium falciparum (isolate 3D7)).